A 247-amino-acid chain; its full sequence is UPF0309 protein LMOf2365_2617 (247 aa).

Residues 31 to 214 (VAESIENDGV…ETMVNDNFTP (184 aa)) enclose the SIS domain.

Belongs to the UPF0309 family.

The chain is UPF0309 protein LMOf2365_2617 from Listeria monocytogenes serotype 4b (strain F2365).